The sequence spans 248 residues: Allergin-1 (248 aa).

The signal sequence occupies residues 1–33 (MGDDDTPVCLSVASCKGVSCWLDKLLLWALTLS). Residues 34–150 (ITLRNTAVDC…DESCSSCLLS (117 aa)) lie on the Extracellular side of the membrane. The Ig-like C2-type domain maps to 54–137 (PNLNSSMSVV…SKYSQNFNFT (84 aa)). Asn68 carries an N-linked (GlcNAc...) asparagine glycan. A disulfide bond links Cys73 and Cys120. An N-linked (GlcNAc...) asparagine glycan is attached at Asn135. A helical transmembrane segment spans residues 151 to 171 (LLLPGVLLGLILPGLAFLIYL). At 172–248 (KYKKGCTGKT…DDYIYSELTY (77 aa)) the chain is on the cytoplasmic side. 2 consecutive short sequence motifs (ITIM motif) follow at residues 216–221 (IHYTTP) and 241–246 (YIYSEL). A phosphotyrosine mark is found at Tyr218 and Tyr243.

As to quaternary structure, monomer. Interacts (tyrosine-phosphorylated) with PTPN6, PTPN11 and INPP5D. Post-translationally, N-glycosylated. In terms of tissue distribution, mast cell-specific. Expressed in primary and transformed mast cells.

It localises to the cell membrane. Immunoglobulin-like receptor which plays an inhibitory role in degranulation of mast cells. Negatively regulates IgE-mediated mast cell activation and suppresses the type I immediate hypersensitivity reaction. The protein is Allergin-1 (Milr1) of Rattus norvegicus (Rat).